The sequence spans 310 residues: N-acetyl-gamma-glutamyl-phosphate reductase (310 aa).

C117 is an active-site residue.

Belongs to the NAGSA dehydrogenase family. Type 2 subfamily.

It localises to the cytoplasm. It carries out the reaction N-acetyl-L-glutamate 5-semialdehyde + phosphate + NADP(+) = N-acetyl-L-glutamyl 5-phosphate + NADPH + H(+). Its pathway is amino-acid biosynthesis; L-arginine biosynthesis; N(2)-acetyl-L-ornithine from L-glutamate: step 3/4. Its function is as follows. Catalyzes the NADPH-dependent reduction of N-acetyl-5-glutamyl phosphate to yield N-acetyl-L-glutamate 5-semialdehyde. This chain is N-acetyl-gamma-glutamyl-phosphate reductase, found in Rhizobium johnstonii (strain DSM 114642 / LMG 32736 / 3841) (Rhizobium leguminosarum bv. viciae).